Here is a 271-residue protein sequence, read N- to C-terminus: Shikimate dehydrogenase (NADP(+)) (271 aa).

Shikimate contacts are provided by residues 14-16 and threonine 61; that span reads SQS. Lysine 65 acts as the Proton acceptor in catalysis. Positions 86 and 101 each coordinate shikimate. Residues 125–129, 148–153, and methionine 212 contribute to the NADP(+) site; these read GAGGA and NRTHAR. Tyrosine 214 lines the shikimate pocket. Glycine 236 is an NADP(+) binding site.

Belongs to the shikimate dehydrogenase family. In terms of assembly, homodimer.

It carries out the reaction shikimate + NADP(+) = 3-dehydroshikimate + NADPH + H(+). Its pathway is metabolic intermediate biosynthesis; chorismate biosynthesis; chorismate from D-erythrose 4-phosphate and phosphoenolpyruvate: step 4/7. Its function is as follows. Involved in the biosynthesis of the chorismate, which leads to the biosynthesis of aromatic amino acids. Catalyzes the reversible NADPH linked reduction of 3-dehydroshikimate (DHSA) to yield shikimate (SA). The chain is Shikimate dehydrogenase (NADP(+)) from Edwardsiella ictaluri (strain 93-146).